Here is a 278-residue protein sequence, read N- to C-terminus: Inner membrane mitoribosome receptor MBA1, mitochondrial (278 aa).

The transit peptide at 1 to 33 (MSVLRSTCLFFPPRSLLISFNKRRLFSTSRLIL) directs the protein to the mitochondrion.

As to quaternary structure, interacts with OXA1 and MDM38. Binds to mitoribosomes in order to recruit them to the mitochondrial inner membrane.

It localises to the mitochondrion inner membrane. Functionally, mitochondrial inner membrane-associated mitoribosome receptor that spatially aligns the mitoribosome exit tunnel with the membrane insertion machinery and allows cotranslational protein membrane insertion. The chain is Inner membrane mitoribosome receptor MBA1, mitochondrial from Saccharomyces cerevisiae (strain ATCC 204508 / S288c) (Baker's yeast).